The primary structure comprises 268 residues: Shikimate dehydrogenase (NADP(+)) (268 aa).

Residues 13–15 and Thr60 each bind shikimate; that span reads SLS. Residue Lys64 is the Proton acceptor of the active site. An NADP(+)-binding site is contributed by Asp76. Asn85 and Asp100 together coordinate shikimate. NADP(+)-binding positions include 124–128, 148–153, and Ile209; these read GAGGA and NRTMSR. Residue Tyr211 participates in shikimate binding. Gly232 is a binding site for NADP(+).

The protein belongs to the shikimate dehydrogenase family. As to quaternary structure, homodimer.

The catalysed reaction is shikimate + NADP(+) = 3-dehydroshikimate + NADPH + H(+). It participates in metabolic intermediate biosynthesis; chorismate biosynthesis; chorismate from D-erythrose 4-phosphate and phosphoenolpyruvate: step 4/7. Its function is as follows. Involved in the biosynthesis of the chorismate, which leads to the biosynthesis of aromatic amino acids. Catalyzes the reversible NADPH linked reduction of 3-dehydroshikimate (DHSA) to yield shikimate (SA). The protein is Shikimate dehydrogenase (NADP(+)) of Staphylococcus haemolyticus (strain JCSC1435).